The chain runs to 294 residues: Putative deoxyribonuclease TATDN3 (294 aa).

Positions 9, 11, 104, 144, 167, and 215 each coordinate Zn(2+).

The protein belongs to the metallo-dependent hydrolases superfamily. TatD-type hydrolase family. Requires Mn(2+) as cofactor. The cofactor is Ca(2+). It depends on Mg(2+) as a cofactor. Zn(2+) serves as cofactor.

The protein resides in the nucleus. Its activity is regulated as follows. The 3'-exonuclease activity is sensitive to the metal ion present in the active site, whereas the AP endodeoxyribonuclease activity is observed in a variety of divalent metal cofactors. 3'-exoxonuclease activity is suppressed in the presence of Ca(2+), Zn(2+) and Ni(2+). In terms of biological role, exhibits 3'-exonuclease activities and apurinic/apyrimidinic (AP) endonuclease (in vitro). Show preferential AP endonuclease activity on double-stranded DNA substrates and 3'- exonuclease activity on single-stranded DNA. The polypeptide is Putative deoxyribonuclease TATDN3 (Tatdn3) (Mus musculus (Mouse)).